We begin with the raw amino-acid sequence, 122 residues long: Large ribosomal subunit protein uL18 (122 aa).

It belongs to the universal ribosomal protein uL18 family. As to quaternary structure, part of the 50S ribosomal subunit; part of the 5S rRNA/L5/L18/L25 subcomplex. Contacts the 5S and 23S rRNAs.

Functionally, this is one of the proteins that bind and probably mediate the attachment of the 5S RNA into the large ribosomal subunit, where it forms part of the central protuberance. The chain is Large ribosomal subunit protein uL18 from Synechococcus sp. (strain JA-2-3B'a(2-13)) (Cyanobacteria bacterium Yellowstone B-Prime).